The sequence spans 385 residues: F-box only protein 4 (385 aa).

Residues Ser-11 and Ser-46 each carry the phosphoserine modification. The F-box domain maps to 54-100; sequence TSALTRLPVDVQLYILSFLSPHDLCQLGSTDHYWNKTIRDPILWRYF.

In terms of assembly, homodimer. Part of the SCF (SKP1-CUL1-F-box) E3 ubiquitin-protein ligase complex SCF(FBXO4) formed of CUL1, SKP1, RBX1 and FBXO4. Interacts with TERF1; this interaction is prevented in the presence of GNL3L. Identified in a complex with CRYAB and CCND1. Post-translationally, phosphorylation at Ser-11 varies during the cell cycle. It is low in resting cells and high in the S phase and the G2/M phase of the cell cycle. Phosphorylation is decreased during late G1 phase. Phosphorylation at Ser-11 is important for homodimerization and for optimal ubiquitin ligase activity towards CCND1.

The protein localises to the cytoplasm. The protein operates within protein modification; protein ubiquitination. Functionally, substrate recognition component of a SCF (SKP1-CUL1-F-box protein) E3 ubiquitin-protein ligase complex that mediates the ubiquitination and subsequent proteasomal degradation of target proteins. Promotes ubiquitination of cyclin-D1 (CCND1) and its subsequent proteasomal degradation. However, it does not act as a major regulator of CCND1 stability during the G1/S transition. Recognizes TERF1 and promotes its ubiquitination together with UBE2D1. Promotes ubiquitination of FXR1 following phosphorylation of FXR1 by GSK3B, leading to FXR1 degradation by the proteasome. This is F-box only protein 4 from Mus musculus (Mouse).